The following is a 427-amino-acid chain: Glutamate-1-semialdehyde 2,1-aminomutase 1 (427 aa).

At Lys267 the chain carries N6-(pyridoxal phosphate)lysine.

This sequence belongs to the class-III pyridoxal-phosphate-dependent aminotransferase family. HemL subfamily. As to quaternary structure, homodimer. The cofactor is pyridoxal 5'-phosphate.

Its subcellular location is the cytoplasm. It catalyses the reaction (S)-4-amino-5-oxopentanoate = 5-aminolevulinate. The protein operates within porphyrin-containing compound metabolism; protoporphyrin-IX biosynthesis; 5-aminolevulinate from L-glutamyl-tRNA(Glu): step 2/2. The sequence is that of Glutamate-1-semialdehyde 2,1-aminomutase 1 from Staphylococcus epidermidis (strain ATCC 35984 / DSM 28319 / BCRC 17069 / CCUG 31568 / BM 3577 / RP62A).